The sequence spans 292 residues: MKKISTFIITKNESARIARAINSVKNITDEVIVVDNESTDDTVHIAKTLGAQVIVKPWLGYVGQKSFAESMCVNDWVLNIDADEELSQELQDEIEYIFTSHNQDRYLAYQIKLLIMYRGDQKPRMFAPLNKCTRLYNKKFASFANTINSTTHDSVVFNKDVDFTGKIYLLNGIAYHYSGTSIEQLVNKANFYSSEQAKDLVKQGKKLSNFRLATEMIWCFLKAFFIRRYFVFGFDGFVDSIIFAFARFLRLAKLRDLSLKSQNVITSDNYINYCMDFKSLLQQKKRNRYPKK.

This sequence belongs to the glycosyltransferase 2 family. WaaE/KdtX subfamily.

This is an uncharacterized protein from Rickettsia prowazekii (strain Madrid E).